A 393-amino-acid chain; its full sequence is Probable acetyl-CoA acyltransferase (393 aa).

The active-site Acyl-thioester intermediate is Cys88. Catalysis depends on proton acceptor residues His349 and Cys378.

Belongs to the thiolase-like superfamily. Thiolase family.

Its subcellular location is the cytoplasm. The enzyme catalyses 2 acetyl-CoA = acetoacetyl-CoA + CoA. In Staphylococcus aureus (strain MSSA476), this protein is Probable acetyl-CoA acyltransferase.